The sequence spans 484 residues: Protein nucleotidyltransferase YdiU (484 aa).

Glycine 87, glycine 89, arginine 90, lysine 110, aspartate 122, glycine 123, arginine 173, and arginine 180 together coordinate ATP. Residue aspartate 249 is the Proton acceptor of the active site. 2 residues coordinate Mg(2+): asparagine 250 and aspartate 259. Aspartate 259 provides a ligand contact to ATP.

This sequence belongs to the SELO family. Requires Mg(2+) as cofactor. Mn(2+) serves as cofactor.

It carries out the reaction L-seryl-[protein] + ATP = 3-O-(5'-adenylyl)-L-seryl-[protein] + diphosphate. It catalyses the reaction L-threonyl-[protein] + ATP = 3-O-(5'-adenylyl)-L-threonyl-[protein] + diphosphate. The catalysed reaction is L-tyrosyl-[protein] + ATP = O-(5'-adenylyl)-L-tyrosyl-[protein] + diphosphate. The enzyme catalyses L-histidyl-[protein] + UTP = N(tele)-(5'-uridylyl)-L-histidyl-[protein] + diphosphate. It carries out the reaction L-seryl-[protein] + UTP = O-(5'-uridylyl)-L-seryl-[protein] + diphosphate. It catalyses the reaction L-tyrosyl-[protein] + UTP = O-(5'-uridylyl)-L-tyrosyl-[protein] + diphosphate. In terms of biological role, nucleotidyltransferase involved in the post-translational modification of proteins. It can catalyze the addition of adenosine monophosphate (AMP) or uridine monophosphate (UMP) to a protein, resulting in modifications known as AMPylation and UMPylation. The protein is Protein nucleotidyltransferase YdiU of Alcanivorax borkumensis (strain ATCC 700651 / DSM 11573 / NCIMB 13689 / SK2).